A 244-amino-acid polypeptide reads, in one-letter code: Proteasome subunit alpha 2 (244 aa).

It belongs to the peptidase T1A family. As to quaternary structure, the 20S proteasome core is composed of 14 alpha and 14 beta subunits that assemble into four stacked heptameric rings, resulting in a barrel-shaped structure. The two inner rings, each composed of seven catalytic beta subunits, are sandwiched by two outer rings, each composed of seven alpha subunits. The catalytic chamber with the active sites is on the inside of the barrel. Has a gated structure, the ends of the cylinder being occluded by the N-termini of the alpha-subunits. Is capped at one or both ends by the proteasome regulatory ATPase, PAN.

The protein resides in the cytoplasm. Its activity is regulated as follows. The formation of the proteasomal ATPase PAN-20S proteasome complex, via the docking of the C-termini of PAN into the intersubunit pockets in the alpha-rings, triggers opening of the gate for substrate entry. Interconversion between the open-gate and close-gate conformations leads to a dynamic regulation of the 20S proteasome proteolysis activity. Functionally, component of the proteasome core, a large protease complex with broad specificity involved in protein degradation. This Haloarcula marismortui (strain ATCC 43049 / DSM 3752 / JCM 8966 / VKM B-1809) (Halobacterium marismortui) protein is Proteasome subunit alpha 2.